A 144-amino-acid polypeptide reads, in one-letter code: Grifin (144 aa).

The 129-residue stretch at 5–133 (FEAFCAGGLA…EHRLAQVELA (129 aa)) folds into the Galectin domain. Ser-138 carries the post-translational modification Phosphoserine.

In terms of assembly, homodimer.

This is Grifin (Grifin) from Mus musculus (Mouse).